Here is a 412-residue protein sequence, read N- to C-terminus: Na(+)/H(+) antiporter NhaA 1 (412 aa).

Transmembrane regions (helical) follow at residues 34 to 54 (VGGMVLLAAAALALVLANSPA), 75 to 95 (LTIGEWAKDGLLAIFFFVAGL), 114 to 134 (LPVVAALGGMVVPAVLAFAIG), 142 to 162 (AAWAIPVATDIAFALGVLSLT), 183 to 203 (LGAIVVIAVLFTSGLSVLALL), 234 to 254 (WIAVHSSGIHATIAGVALGLL), 282 to 302 (LIVPVFALFAAGVPVDGEALV), 309 to 329 (VAIAVVVGLVVGKLVGIFGSS), 349 to 369 (LSALAMLGGVGFTVSLLIAEL), and 379 to 399 (AKAAVLIASALASLLAAVMLL).

The protein belongs to the NhaA Na(+)/H(+) (TC 2.A.33) antiporter family.

The protein localises to the cell membrane. The catalysed reaction is Na(+)(in) + 2 H(+)(out) = Na(+)(out) + 2 H(+)(in). Functionally, na(+)/H(+) antiporter that extrudes sodium in exchange for external protons. The protein is Na(+)/H(+) antiporter NhaA 1 of Saccharopolyspora erythraea (strain ATCC 11635 / DSM 40517 / JCM 4748 / NBRC 13426 / NCIMB 8594 / NRRL 2338).